The sequence spans 757 residues: Xaa-Pro dipeptidyl-peptidase (757 aa).

Residues serine 348, aspartate 468, and histidine 498 each act as charge relay system in the active site.

Belongs to the peptidase S15 family. In terms of assembly, homodimer.

The protein localises to the cytoplasm. The catalysed reaction is Hydrolyzes Xaa-Pro-|- bonds to release unblocked, N-terminal dipeptides from substrates including Ala-Pro-|-p-nitroanilide and (sequentially) Tyr-Pro-|-Phe-Pro-|-Gly-Pro-|-Ile.. Functionally, removes N-terminal dipeptides sequentially from polypeptides having unsubstituted N-termini provided that the penultimate residue is proline. The sequence is that of Xaa-Pro dipeptidyl-peptidase from Streptococcus pneumoniae (strain Hungary19A-6).